The following is a 330-amino-acid chain: Glucokinase (330 aa).

Position 14-19 (Ala14–Thr19) interacts with ATP.

The protein belongs to the bacterial glucokinase family.

The protein resides in the cytoplasm. It catalyses the reaction D-glucose + ATP = D-glucose 6-phosphate + ADP + H(+). The sequence is that of Glucokinase from Colwellia psychrerythraea (strain 34H / ATCC BAA-681) (Vibrio psychroerythus).